The sequence spans 373 residues: Phospho-N-acetylmuramoyl-pentapeptide-transferase (373 aa).

The next 11 helical transmembrane spans lie at 16–36 (WWTK…AASF), 46–66 (LLSL…SWGI), 93–113 (PTMG…FVSV), 120–140 (QLLA…FDDW), 157–177 (LLLQ…QHWI), 185–205 (LGIS…VFLA), 216–236 (LDGL…VQLM), 242–262 (GNPV…GFLM), 270–290 (VFMG…VAIL), 298–318 (LVMG…VWVF), and 350–369 (MVVR…GLLL).

It belongs to the glycosyltransferase 4 family. MraY subfamily. The cofactor is Mg(2+).

The protein resides in the cell inner membrane. It catalyses the reaction UDP-N-acetyl-alpha-D-muramoyl-L-alanyl-gamma-D-glutamyl-meso-2,6-diaminopimeloyl-D-alanyl-D-alanine + di-trans,octa-cis-undecaprenyl phosphate = di-trans,octa-cis-undecaprenyl diphospho-N-acetyl-alpha-D-muramoyl-L-alanyl-D-glutamyl-meso-2,6-diaminopimeloyl-D-alanyl-D-alanine + UMP. It participates in cell wall biogenesis; peptidoglycan biosynthesis. Functionally, catalyzes the initial step of the lipid cycle reactions in the biosynthesis of the cell wall peptidoglycan: transfers peptidoglycan precursor phospho-MurNAc-pentapeptide from UDP-MurNAc-pentapeptide onto the lipid carrier undecaprenyl phosphate, yielding undecaprenyl-pyrophosphoryl-MurNAc-pentapeptide, known as lipid I. This is Phospho-N-acetylmuramoyl-pentapeptide-transferase from Prochlorococcus marinus (strain MIT 9313).